The sequence spans 294 residues: Mitochondrial substrate carrier family protein ucpB (294 aa).

At 1–10 (MTSQESIGIK) the chain is on the mitochondrial intermembrane side. 3 Solcar repeats span residues 9-93 (IKFL…IKNY), 101-187 (TNLL…IKHM), and 197-288 (DGLQ…LRKV). Residues 11-31 (FLFGGLSCMGAAVVSNPVDVL) traverse the membrane as a helical segment. Over 32-67 (KTRFQIHGEGIDSKSLGLVNGTIKIIKNEGISAMYK) the chain is Mitochondrial matrix. The chain crosses the membrane as a helical span at residues 68 to 88 (GLTPSLLREATYSTLRMGGYD). Over 89–106 (VIKNYFIDSNGKTNLLSK) the chain is Mitochondrial intermembrane. Residues 107–127 (VTSGALSGALGACITSPTDLI) traverse the membrane as a helical segment. At 128–161 (KVRMQASSKGVKYDSISSAFKEIIAKEGIKGLWK) the chain is on the mitochondrial matrix side. Residues 162 to 182 (GVGPTTQRAALLTASQIPSYD) traverse the membrane as a helical segment. The Mitochondrial intermembrane portion of the chain corresponds to 183–192 (HIKHMILDHG). The helical transmembrane segment at 193–213 (IIQVDGLQVHIVSSIFAGLIA) threads the bilayer. Topologically, residues 214–267 (SITTSPVDLVKTRIMNQPFDSNGVGLIYKSSYDCFKKTFQSEGISGLYKGFLPN) are mitochondrial matrix. Residues 268 to 285 (WFRIGPHTIVTFILYEYL) form a helical membrane-spanning segment. Residues 286–294 (RKVSGIKPI) lie on the Mitochondrial intermembrane side of the membrane.

Belongs to the mitochondrial carrier (TC 2.A.29) family.

It is found in the mitochondrion inner membrane. In terms of biological role, mitochondrial solute carriers shuttle metabolites, nucleotides, and cofactors through the mitochondrial inner membrane. The polypeptide is Mitochondrial substrate carrier family protein ucpB (ucpB) (Dictyostelium discoideum (Social amoeba)).